The chain runs to 561 residues: MRLWKSMAWGILLWHSQSGALCPAWPPARAAEEITRLQQQLADWNDIYWKQGVSAVDDSVYDQLSARLVQWQRCVGQDVSSTPVSPPLNGTTMHPVAHTGVRKLADRQAVEQWMRGRSELWVQPKVDGVAVTLVYQNGKLTRAISRGNGLQGEDWTPKIRLIPSIPQTTQGALANAVLQGEIFLQREGHIQQRMGGMNARSKVAGMLMRQDNASALNSLGIFIWAWPDGPANMPERLSQLAKAGFSLTNKYTLAVKDASEVERARQSWLTSALPFVTDGVVIRMAKEPASQHWRPGQGDWLAAWKYPPVAQVAQVSAIQFSVGKSGKITVVASLVPVILDDKRVQRVNIDSVKRWEAWDIAPGDQILVSLAGQGIPRLDEVVWRSRERSKPVPPDSHFNSLTCFYASETCQEQFISRLVWLGSRSALGLDGMGEASWRALHQTHRFKHIFSWLALTSAQIANTPGFAKGKSEQIWRQFNLARRQSFTRWIMAMDIPLTQAALQASGDRSWEQLLMRTEQHWWQLPATGERRAGRVIDWRNNPQIKTLSRWLAAQHIPGFGS.

Lys-125 (N6-AMP-lysine intermediate) is an active-site residue.

This sequence belongs to the NAD-dependent DNA ligase family. LigB subfamily.

It carries out the reaction NAD(+) + (deoxyribonucleotide)n-3'-hydroxyl + 5'-phospho-(deoxyribonucleotide)m = (deoxyribonucleotide)n+m + AMP + beta-nicotinamide D-nucleotide.. Catalyzes the formation of phosphodiester linkages between 5'-phosphoryl and 3'-hydroxyl groups in double-stranded DNA using NAD as a coenzyme and as the energy source for the reaction. The chain is DNA ligase B from Salmonella gallinarum (strain 287/91 / NCTC 13346).